Here is a 371-residue protein sequence, read N- to C-terminus: MKILGFMTGTSLDAVDMAVLETDGVEISAFGPAGERKLREATRDLLLKTTDIARAWPRGEPEPVIFEEARRAVADEHFQAAESFLDEHGLSWSDFDLLGVHGQTVLHERPTAQRVGRTVQLLDADRLARLCGRPVAFDFRTADVAVGGEGAPLAPIYHAARARASGLAAPVAALNVGGVANITLIGANGDLLAFDTGPGNGMIDLMLQARGLGRFDEDGRLALAGRVDEAVLAALLDSPYFDAPAPKSLDRYDFSLTPVDHLSAEDAAATLVAFTAEAVFKAFAQSGEAPSALIVCGGGRHNPAIMQTLAARAPVPVKSAEAYGWRGDSIEAEAFAYLAARTAKGLPISFPGTTGVPAPMTGGRIVGLISA.

9 to 16 (GTSLDAVD) contacts ATP.

It belongs to the anhydro-N-acetylmuramic acid kinase family.

The enzyme catalyses 1,6-anhydro-N-acetyl-beta-muramate + ATP + H2O = N-acetyl-D-muramate 6-phosphate + ADP + H(+). It participates in amino-sugar metabolism; 1,6-anhydro-N-acetylmuramate degradation. Its pathway is cell wall biogenesis; peptidoglycan recycling. In terms of biological role, catalyzes the specific phosphorylation of 1,6-anhydro-N-acetylmuramic acid (anhMurNAc) with the simultaneous cleavage of the 1,6-anhydro ring, generating MurNAc-6-P. Is required for the utilization of anhMurNAc either imported from the medium or derived from its own cell wall murein, and thus plays a role in cell wall recycling. The chain is Anhydro-N-acetylmuramic acid kinase from Caulobacter vibrioides (strain ATCC 19089 / CIP 103742 / CB 15) (Caulobacter crescentus).